Reading from the N-terminus, the 156-residue chain is Small ribosomal subunit protein bS16 (156 aa).

A compositionally biased stretch (low complexity) spans 124–135 (AAKAAEAETPAE). A disordered region spans residues 124–156 (AAKAAEAETPAEVQHDDEKVELADVEESAPESV). The segment covering 136-145 (VQHDDEKVEL) has biased composition (basic and acidic residues). A compositionally biased stretch (acidic residues) spans 146–156 (ADVEESAPESV).

This sequence belongs to the bacterial ribosomal protein bS16 family.

This is Small ribosomal subunit protein bS16 from Bifidobacterium animalis subsp. lactis (strain AD011).